The primary structure comprises 593 residues: Arginine--tRNA ligase (593 aa).

The short motif at 123 to 133 (PNVAKPMHVGH) is the 'HIGH' region element.

It belongs to the class-I aminoacyl-tRNA synthetase family. In terms of assembly, monomer.

It is found in the cytoplasm. It carries out the reaction tRNA(Arg) + L-arginine + ATP = L-arginyl-tRNA(Arg) + AMP + diphosphate. The chain is Arginine--tRNA ligase from Phenylobacterium zucineum (strain HLK1).